Here is a 505-residue protein sequence, read N- to C-terminus: Maturase K (505 aa).

It belongs to the intron maturase 2 family. MatK subfamily.

It localises to the plastid. The protein localises to the chloroplast. In terms of biological role, usually encoded in the trnK tRNA gene intron. Probably assists in splicing its own and other chloroplast group II introns. The sequence is that of Maturase K from Calycanthus occidentalis (Spice bush).